Here is a 211-residue protein sequence, read N- to C-terminus: uncharacterized protein (211 aa).

The segment at 187–211 is disordered; the sequence is LKVSEQENSEAPVSEPKEDEKTKKD. Residues 201–211 are compositionally biased toward basic and acidic residues; that stretch reads EPKEDEKTKKD.

This is an uncharacterized protein from Spiroplasma citri.